A 345-amino-acid polypeptide reads, in one-letter code: Phosphoribosylformylglycinamidine cyclo-ligase (345 aa).

Belongs to the AIR synthase family.

The protein resides in the cytoplasm. The enzyme catalyses 2-formamido-N(1)-(5-O-phospho-beta-D-ribosyl)acetamidine + ATP = 5-amino-1-(5-phospho-beta-D-ribosyl)imidazole + ADP + phosphate + H(+). The protein operates within purine metabolism; IMP biosynthesis via de novo pathway; 5-amino-1-(5-phospho-D-ribosyl)imidazole from N(2)-formyl-N(1)-(5-phospho-D-ribosyl)glycinamide: step 2/2. This is Phosphoribosylformylglycinamidine cyclo-ligase from Escherichia coli O45:K1 (strain S88 / ExPEC).